Here is an 85-residue protein sequence, read N- to C-terminus: High affinity immunoglobulin epsilon receptor subunit gamma (85 aa).

Residues 1 to 18 form the signal peptide; the sequence is MIPAVVLLLLLLVEQAAA. The Extracellular portion of the chain corresponds to 19–23; it reads LGEPQ. Residues 24-44 form a helical membrane-spanning segment; it reads LCYILDAILFLYGIVLTLLYC. The Cytoplasmic segment spans residues 45–85; it reads RLKLQVRKAATASEKSDGIYTGLSTRTQETYETLKHEKPPQ. Residues 53 to 81 enclose the ITAM domain; that stretch reads AATASEKSDGIYTGLSTRTQETYETLKHE. At Y64 the chain carries Phosphotyrosine. At S68 the chain carries Phosphoserine. Phosphotyrosine is present on Y75. T77 carries the phosphothreonine modification.

Belongs to the CD3Z/FCER1G family. As to quaternary structure, igE Fc receptor is a tetramer of an alpha chain, a beta chain, and two disulfide linked gamma chains. Associates with FCGR1A; forms a functional signaling complex. The signaling subunit of immunoglobulin gamma (IgG) Fc receptor complex. As a homodimer or a heterodimer of CD247 and FCER1G, associates with the ligand binding subunit FCGR3A to form a functional receptor complex. Associates with CLEC6A. Interacts with CLEC4E. Interacts (via ITAM domain) with SYK (via SH2 domains); activates SYK, enabling integrin-mediated activation of neutrophils and macrophages. Interacts with CSF2RB and recruits SYK in response to IL3 stimulation; this interaction is direct. Interacts with CD300LH; the interaction may be indirect. Interacts with CD300LD. Interacts with TARM1.

Its subcellular location is the cell membrane. In terms of biological role, adapter protein containing an immunoreceptor tyrosine-based activation motif (ITAM) that transduces activation signals from various immunoreceptors. As a component of the high-affinity immunoglobulin E (IgE) receptor, mediates allergic inflammatory signaling in mast cells. As a constitutive component of interleukin-3 receptor complex, selectively mediates interleukin 4/IL4 production by basophils priming T-cells toward effector T-helper 2 subset. Associates with pattern recognition receptors CLEC4D and CLEC4E to form a functional signaling complex in myeloid cells. Binding of mycobacterial trehalose 6,6'-dimycolate (TDM) to this receptor complex leads to phosphorylation of ITAM, triggering activation of SYK, CARD9 and NF-kappa-B, consequently driving maturation of antigen-presenting cells and shaping antigen-specific priming of T-cells toward effector T-helper 1 and T-helper 17 cell subtypes. May function cooperatively with other activating receptors. Functionally linked to integrin beta-2/ITGB2-mediated neutrophil activation. Also involved in integrin alpha-2/ITGA2-mediated platelet activation. This chain is High affinity immunoglobulin epsilon receptor subunit gamma (FCER1G), found in Bos taurus (Bovine).